The chain runs to 1690 residues: DNA-directed RNA polymerase subunit beta' (1690 aa).

Zn(2+) is bound by residues C63, C65, C78, and C81. Mg(2+) is bound by residues D753, D755, and D757. Residues C1107, C1295, C1302, and C1305 each contribute to the Zn(2+) site.

This sequence belongs to the RNA polymerase beta' chain family. In terms of assembly, the RNAP catalytic core consists of 2 alpha, 1 beta, 1 beta' and 1 omega subunit. When a sigma factor is associated with the core the holoenzyme is formed, which can initiate transcription. Requires Mg(2+) as cofactor. The cofactor is Zn(2+).

The enzyme catalyses RNA(n) + a ribonucleoside 5'-triphosphate = RNA(n+1) + diphosphate. Functionally, DNA-dependent RNA polymerase catalyzes the transcription of DNA into RNA using the four ribonucleoside triphosphates as substrates. In Thermotoga neapolitana (strain ATCC 49049 / DSM 4359 / NBRC 107923 / NS-E), this protein is DNA-directed RNA polymerase subunit beta'.